The chain runs to 1066 residues: Carbamoyl phosphate synthase large chain (1066 aa).

The interval 1-401 is carboxyphosphate synthetic domain; it reads MPKNNNIKKV…ALMKAVRSLE (401 aa). 12 residues coordinate ATP: Arg-129, Arg-169, Gly-175, Gly-176, Arg-208, Ile-210, Glu-215, Gly-241, Val-242, His-243, Gln-284, and Glu-298. Residues 133 to 327 form the ATP-grasp 1 domain; that stretch reads KNTMEKIGEP…IAKVAAKIAL (195 aa). Residues Gln-284, Glu-298, and Asn-300 each contribute to the Mg(2+) site. Positions 284, 298, and 300 each coordinate Mn(2+). An oligomerization domain region spans residues 402–547; it reads QNIYSMNYGD…YSCFDSENEV (146 aa). The segment at 548 to 931 is carbamoyl phosphate synthetic domain; it reads DATKTKKKVL…ALYKAFLGAG (384 aa). The region spanning 673-863 is the ATP-grasp 2 domain; it reads DEILEKCCIP…IVSLASKAVL (191 aa). Arg-709, Lys-748, Leu-750, Glu-754, Gly-779, Ile-780, His-781, Ser-782, Gln-822, and Glu-834 together coordinate ATP. Mg(2+) is bound by residues Gln-822, Glu-834, and Asn-836. Gln-822, Glu-834, and Asn-836 together coordinate Mn(2+). The MGS-like domain maps to 932-1066; the sequence is INLPKHKKMI…ELSLIDIARI (135 aa). An allosteric domain region spans residues 932 to 1066; the sequence is INLPKHKKMI…ELSLIDIARI (135 aa).

The protein belongs to the CarB family. In terms of assembly, composed of two chains; the small (or glutamine) chain promotes the hydrolysis of glutamine to ammonia, which is used by the large (or ammonia) chain to synthesize carbamoyl phosphate. Tetramer of heterodimers (alpha,beta)4. It depends on Mg(2+) as a cofactor. Mn(2+) is required as a cofactor.

It catalyses the reaction hydrogencarbonate + L-glutamine + 2 ATP + H2O = carbamoyl phosphate + L-glutamate + 2 ADP + phosphate + 2 H(+). It carries out the reaction hydrogencarbonate + NH4(+) + 2 ATP = carbamoyl phosphate + 2 ADP + phosphate + 2 H(+). It participates in amino-acid biosynthesis; L-arginine biosynthesis; carbamoyl phosphate from bicarbonate: step 1/1. Its pathway is pyrimidine metabolism; UMP biosynthesis via de novo pathway; (S)-dihydroorotate from bicarbonate: step 1/3. In terms of biological role, large subunit of the glutamine-dependent carbamoyl phosphate synthetase (CPSase). CPSase catalyzes the formation of carbamoyl phosphate from the ammonia moiety of glutamine, carbonate, and phosphate donated by ATP, constituting the first step of 2 biosynthetic pathways, one leading to arginine and/or urea and the other to pyrimidine nucleotides. The large subunit (synthetase) binds the substrates ammonia (free or transferred from glutamine from the small subunit), hydrogencarbonate and ATP and carries out an ATP-coupled ligase reaction, activating hydrogencarbonate by forming carboxy phosphate which reacts with ammonia to form carbamoyl phosphate. This Lachnoclostridium phytofermentans (strain ATCC 700394 / DSM 18823 / ISDg) (Clostridium phytofermentans) protein is Carbamoyl phosphate synthase large chain.